The sequence spans 747 residues: AT-rich interactive domain-containing protein 4 (747 aa).

The tract at residues P454–P475 is disordered. The segment covering K459 to E471 has biased composition (basic and acidic residues). Residues V566–D670 form the ARID domain. The PHD-type zinc-finger motif lies at G674–S730.

The protein localises to the nucleus. The sequence is that of AT-rich interactive domain-containing protein 4 (ARID4) from Arabidopsis thaliana (Mouse-ear cress).